The chain runs to 324 residues: Bis(5'-nucleosyl)-tetraphosphatase, symmetrical (324 aa).

The disordered stretch occupies residues 269–324 (PGREVTAPATAPRAPRRPRERQGRQRARGGRGGGNGNGNGGNAAAPAAAPGDAPQE). Residues 282-297 (APRRPRERQGRQRARG) show a composition bias toward basic residues. Residues 298-309 (GRGGGNGNGNGG) show a composition bias toward gly residues. Residues 310-324 (NAAAPAAAPGDAPQE) are compositionally biased toward low complexity.

This sequence belongs to the Ap4A hydrolase family.

The enzyme catalyses P(1),P(4)-bis(5'-adenosyl) tetraphosphate + H2O = 2 ADP + 2 H(+). Its function is as follows. Hydrolyzes diadenosine 5',5'''-P1,P4-tetraphosphate to yield ADP. This chain is Bis(5'-nucleosyl)-tetraphosphatase, symmetrical, found in Xanthomonas campestris pv. campestris (strain ATCC 33913 / DSM 3586 / NCPPB 528 / LMG 568 / P 25).